Reading from the N-terminus, the 86-residue chain is Large ribosomal subunit protein bL27 (86 aa).

The segment covering 1-10 has biased composition (gly residues); sequence MAQKKGGGST. The disordered stretch occupies residues 1-21; it reads MAQKKGGGSTRNGRDSESKRL.

Belongs to the bacterial ribosomal protein bL27 family.

The polypeptide is Large ribosomal subunit protein bL27 (Ralstonia nicotianae (strain ATCC BAA-1114 / GMI1000) (Ralstonia solanacearum)).